We begin with the raw amino-acid sequence, 439 residues long: Xylose isomerase (439 aa).

Active-site residues include His101 and Asp104. Mg(2+) contacts are provided by Glu232, Glu268, His271, Asp296, Asp307, Asp309, and Asp339.

This sequence belongs to the xylose isomerase family. In terms of assembly, homotetramer. Requires Mg(2+) as cofactor.

It localises to the cytoplasm. The catalysed reaction is alpha-D-xylose = alpha-D-xylulofuranose. The chain is Xylose isomerase from Serratia proteamaculans (strain 568).